Consider the following 219-residue polypeptide: Octanoyltransferase (219 aa).

A BPL/LPL catalytic domain is found at 32-207 (ADSGDEIWLL…HLVRQLGYAQ (176 aa)). Substrate-binding positions include 71–78 (RGGQVTYH), 138–140 (SLG), and 151–153 (GLA). Cys169 (acyl-thioester intermediate) is an active-site residue.

It belongs to the LipB family.

The protein resides in the cytoplasm. It carries out the reaction octanoyl-[ACP] + L-lysyl-[protein] = N(6)-octanoyl-L-lysyl-[protein] + holo-[ACP] + H(+). The protein operates within protein modification; protein lipoylation via endogenous pathway; protein N(6)-(lipoyl)lysine from octanoyl-[acyl-carrier-protein]: step 1/2. Its function is as follows. Catalyzes the transfer of endogenously produced octanoic acid from octanoyl-acyl-carrier-protein onto the lipoyl domains of lipoate-dependent enzymes. Lipoyl-ACP can also act as a substrate although octanoyl-ACP is likely to be the physiological substrate. This Stutzerimonas stutzeri (strain A1501) (Pseudomonas stutzeri) protein is Octanoyltransferase.